The primary structure comprises 144 residues: Maximins 10/H15 (144 aa).

The N-terminal stretch at 1–18 is a signal peptide; the sequence is MNFKYIVAVSFLIASAYA. A propeptide spanning residues 19 to 43 is cleaved from the precursor; it reads RSVQNDEQSLSQRDVLEEESLREIR. At S70 the chain carries Serine amide. A propeptide spanning residues 74–123 is cleaved from the precursor; the sequence is TAEDHEVMKRLEAVMRDLDSLDYPEEATERETRGFNQEEIANLFTKKEKR. At L143 the chain carries Leucine amide.

This sequence belongs to the bombinin family. In terms of tissue distribution, expressed by the skin glands.

The protein resides in the secreted. In terms of biological role, maximin-10 shows antimicrobial activity against bacteria and against the fungus C.albicans. It has little hemolytic activity. Maximin-H15 shows antimicrobial activity against bacteria and against the fungus C.albicans. Shows strong hemolytic activity. The sequence is that of Maximins 10/H15 from Bombina maxima (Giant fire-bellied toad).